We begin with the raw amino-acid sequence, 450 residues long: Beta-glucosidase (450 aa).

The active-site Proton donor is E166. Residue E355 is the Nucleophile of the active site.

It belongs to the glycosyl hydrolase 1 family.

The catalysed reaction is Hydrolysis of terminal, non-reducing beta-D-glucosyl residues with release of beta-D-glucose.. This Niallia circulans (Bacillus circulans) protein is Beta-glucosidase (bglA).